The sequence spans 607 residues: Bifunctional endo-1,4-beta-xylanase A (607 aa).

Residues 1 to 18 (MRTIKFFFAVAIATVAKA) form the signal peptide. The GH11 1 domain occupies 35–242 (NGQTQHKGVA…SSGIADVTKL (208 aa)). The active-site Nucleophile is Glu-141. Glu-223 serves as the catalytic Proton donor. Polar residues predominate over residues 248 to 272 (QKGSNPAPTSTGTVPSSSAGGSTAN). The disordered stretch occupies residues 248–284 (QKGSNPAPTSTGTVPSSSAGGSTANGKKFTVGNGQNQ). Positions 280-487 (NGQNQHKGVN…SSGVADVTLL (208 aa)) constitute a GH11 2 domain. The active-site Nucleophile is Glu-386. Glu-474 acts as the Proton donor in catalysis. A disordered region spans residues 493-514 (PKGSSPATSAAPRTTTRTTTRT). A compositionally biased stretch (low complexity) spans 496–514 (SSPATSAAPRTTTRTTTRT). 2 CBM10 domains span residues 523–563 (KCSA…CGCG) and 566–606 (QCSS…CGCG).

This sequence belongs to the glycosyl hydrolase 11 (cellulase G) family.

It carries out the reaction Endohydrolysis of (1-&gt;4)-beta-D-xylosidic linkages in xylans.. It participates in glycan degradation; xylan degradation. Hydrolyzes xylans into xylobiose and xylose. This Neocallimastix patriciarum (Rumen fungus) protein is Bifunctional endo-1,4-beta-xylanase A (XYNA).